A 346-amino-acid polypeptide reads, in one-letter code: Selenoprotein V (346 aa).

2 disordered regions span residues 1–40 and 151–206; these read MNNQ…VRTR and LDPP…PGPT. Pro residues predominate over residues 151 to 162; it reads LDPPPEPAPELP. Positions 270–273 form a cross-link, cysteinyl-selenocysteine (Cys-Sec); redox-active; the sequence is CGLU. Position 273 (U273) is a non-standard amino acid, selenocysteine.

It belongs to the SelWTH family. In terms of processing, truncated SELENOV proteins produced by failed UGA/Sec decoding are ubiquitinated by the CRL2(APPBP2) complex, which recognizes the glycine (Gly) at the C-terminus of truncated SELENOV proteins. Testis specific.

May be involved in a redox-related process. This chain is Selenoprotein V, found in Homo sapiens (Human).